The following is a 118-amino-acid chain: UPF0342 protein BAMEG_3696 (118 aa).

This sequence belongs to the UPF0342 family.

The protein is UPF0342 protein BAMEG_3696 of Bacillus anthracis (strain CDC 684 / NRRL 3495).